We begin with the raw amino-acid sequence, 328 residues long: Complex I intermediate-associated protein 30, mitochondrial (328 aa).

A mitochondrion-targeting transit peptide spans 1–24 (MSSIHKLLTGIYIHKNFLRPRAAL). Over residues 44-54 (VTSVDRASQQG) the composition is skewed to polar residues. A disordered region spans residues 44-80 (VTSVDRASQQGKTEEGLQGHDHKEVALDAPSPDRTPE). Residues 55–69 (KTEEGLQGHDHKEVA) are compositionally biased toward basic and acidic residues. Phosphoserine is present on Ser319.

Belongs to the CIA30 family. Part of the mitochondrial complex I assembly/MCIA complex that comprises at least the core subunits TMEM126B, NDUFAF1, ECSIT and ACAD9 and complement subunits such as COA1 and TMEM186. Interacts with ECSIT. Interacts with ACAD9. At early stages of complex I assembly, it is found in intermediate subcomplexes that contain different subunits including NDUFB6, NDUFA6, NDUFA9, NDUFS3, NDUFS7, ND1, ND2 and ND3. Interacts with TMEM70 and TMEM242.

The protein resides in the mitochondrion. It is found in the mitochondrion matrix. Its function is as follows. As part of the MCIA complex, involved in the assembly of the mitochondrial complex I. The chain is Complex I intermediate-associated protein 30, mitochondrial from Mus musculus (Mouse).